A 127-amino-acid chain; its full sequence is Ribosome-binding factor A (127 aa).

Belongs to the RbfA family. In terms of assembly, monomer. Binds 30S ribosomal subunits, but not 50S ribosomal subunits or 70S ribosomes.

The protein localises to the cytoplasm. Functionally, one of several proteins that assist in the late maturation steps of the functional core of the 30S ribosomal subunit. Associates with free 30S ribosomal subunits (but not with 30S subunits that are part of 70S ribosomes or polysomes). Required for efficient processing of 16S rRNA. May interact with the 5'-terminal helix region of 16S rRNA. This Aromatoleum aromaticum (strain DSM 19018 / LMG 30748 / EbN1) (Azoarcus sp. (strain EbN1)) protein is Ribosome-binding factor A.